A 212-amino-acid polypeptide reads, in one-letter code: Thymidylate kinase (212 aa).

Position 15-22 (15-22 (GIDGAGKS)) interacts with ATP.

The protein belongs to the thymidylate kinase family.

It catalyses the reaction dTMP + ATP = dTDP + ADP. In terms of biological role, phosphorylation of dTMP to form dTDP in both de novo and salvage pathways of dTTP synthesis. The polypeptide is Thymidylate kinase (Chromobacterium violaceum (strain ATCC 12472 / DSM 30191 / JCM 1249 / CCUG 213 / NBRC 12614 / NCIMB 9131 / NCTC 9757 / MK)).